The chain runs to 389 residues: Chalcone synthase 1 (389 aa).

Residue Cys-164 is part of the active site.

Belongs to the thiolase-like superfamily. Chalcone/stilbene synthases family.

The enzyme catalyses (E)-4-coumaroyl-CoA + 3 malonyl-CoA + 3 H(+) = 2',4,4',6'-tetrahydroxychalcone + 3 CO2 + 4 CoA. It functions in the pathway secondary metabolite biosynthesis; flavonoid biosynthesis. Functionally, the primary product of this enzyme is 4,2',4',6'-tetrahydroxychalcone (also termed naringenin-chalcone or chalcone) which can under specific conditions spontaneously isomerize into naringenin. In Camellia sinensis (Tea plant), this protein is Chalcone synthase 1 (CHS1).